Consider the following 99-residue polypeptide: Malonate decarboxylase acyl carrier protein (99 aa).

An O-(phosphoribosyl dephospho-coenzyme A)serine modification is found at Ser-25.

This sequence belongs to the MdcC family. Covalently binds the prosthetic group of malonate decarboxylase.

Its subcellular location is the cytoplasm. Subunit of malonate decarboxylase, it is an acyl carrier protein to which acetyl and malonyl thioester residues are bound via a 2'-(5''-phosphoribosyl)-3'-dephospho-CoA prosthetic group and turn over during the catalytic mechanism. The protein is Malonate decarboxylase acyl carrier protein of Pseudomonas paraeruginosa (strain DSM 24068 / PA7) (Pseudomonas aeruginosa (strain PA7)).